The primary structure comprises 210 residues: dTTP/UTP pyrophosphatase (210 aa).

The active-site Proton acceptor is Asp80.

Belongs to the Maf family. YhdE subfamily. A divalent metal cation is required as a cofactor.

It is found in the cytoplasm. It catalyses the reaction dTTP + H2O = dTMP + diphosphate + H(+). It carries out the reaction UTP + H2O = UMP + diphosphate + H(+). Its function is as follows. Nucleoside triphosphate pyrophosphatase that hydrolyzes dTTP and UTP. May have a dual role in cell division arrest and in preventing the incorporation of modified nucleotides into cellular nucleic acids. This is dTTP/UTP pyrophosphatase from Nitratidesulfovibrio vulgaris (strain ATCC 29579 / DSM 644 / CCUG 34227 / NCIMB 8303 / VKM B-1760 / Hildenborough) (Desulfovibrio vulgaris).